A 234-amino-acid chain; its full sequence is GTP-binding protein YPT52 (234 aa).

Residues 10–17, 66–70, and 111–114 contribute to the GTP site; these read GDSSVGKS, DTAGQ, and NKVG. Disordered regions lie at residues 131–151 and 206–234; these read QETPSTETSPDSNEGGDEEQK and NRQIGGGNNGQVDINLQRPSTNDPTSCCS. Positions 132 to 142 are enriched in polar residues; that stretch reads ETPSTETSPDS. Ser139 and Ser142 each carry phosphoserine. Residue Lys151 forms a Glycyl lysine isopeptide (Lys-Gly) (interchain with G-Cter in ubiquitin) linkage. The span at 217 to 234 shows a compositional bias: polar residues; that stretch reads VDINLQRPSTNDPTSCCS. 2 S-geranylgeranyl cysteine lipidation sites follow: Cys232 and Cys233.

The protein belongs to the small GTPase superfamily. Rab family. In terms of assembly, interacts with ROY1, YIF1, YIP3, YIP4 and YIP5.

Its subcellular location is the cell membrane. The protein localises to the endoplasmic reticulum. Its function is as follows. Required for transport in the endocytic pathway and for correct sorting of the vacuolar hydrolases suggesting a possible intersection of the endocytic with the vacuolar sorting pathway. May be involved in recruiting the MON1-CCZ1 complex to membranes enriched in phosphatidylinositol 3-phosphate (PtdIns[3]P) or other charged lipids, leading to recruitment of YPT7. The polypeptide is GTP-binding protein YPT52 (YPT52) (Saccharomyces cerevisiae (strain ATCC 204508 / S288c) (Baker's yeast)).